We begin with the raw amino-acid sequence, 389 residues long: uncharacterized protein (389 aa).

3 WD repeats span residues 11–53 (SFGS…QKIK), 146–186 (SHHD…EEDA), and 289–330 (AHGD…LDIP). The residue at position 351 (serine 351) is a Phosphoserine. Positions 361–389 (QKESVSTRPRKEKHKKAKKHSMKSRFKPY) are disordered. Over residues 368–389 (RPRKEKHKKAKKHSMKSRFKPY) the composition is skewed to basic residues.

This is an uncharacterized protein from Saccharomyces cerevisiae (strain ATCC 204508 / S288c) (Baker's yeast).